Here is a 331-residue protein sequence, read N- to C-terminus: Serine/threonine-protein phosphatase PP1 isozyme 7 (331 aa).

An N-acetylmethionine modification is found at methionine 1. Positions 60, 62, 88, and 120 each coordinate Mn(2+). The active-site Proton donor is the histidine 121. Residues histidine 169 and histidine 244 each coordinate Mn(2+).

This sequence belongs to the PPP phosphatase family. PP-1 subfamily. Requires Mn(2+) as cofactor. In terms of tissue distribution, expressed in roots, rosettes and flowers.

The protein localises to the nucleus. It localises to the cytoplasm. The catalysed reaction is O-phospho-L-seryl-[protein] + H2O = L-seryl-[protein] + phosphate. It carries out the reaction O-phospho-L-threonyl-[protein] + H2O = L-threonyl-[protein] + phosphate. Its activity is regulated as follows. Phosphatase activity is strongly reduced by the protein phosphatase inhibitor 2 (I-2). Functionally, serine/threonine-protein phosphatase that possesses phosphatase activity toward para-nitrophenyl phosphate (pNPP) in vitro. The chain is Serine/threonine-protein phosphatase PP1 isozyme 7 from Arabidopsis thaliana (Mouse-ear cress).